Here is a 230-residue protein sequence, read N- to C-terminus: Flagellar L-ring protein (230 aa).

Residues 1–18 (MNRLNIAVSCLATALLFG) form the signal peptide. A lipid anchor (N-palmitoyl cysteine) is attached at C19. C19 is lipidated: S-diacylglycerol cysteine.

It belongs to the FlgH family. As to quaternary structure, the basal body constitutes a major portion of the flagellar organelle and consists of four rings (L,P,S, and M) mounted on a central rod.

The protein localises to the cell outer membrane. It localises to the bacterial flagellum basal body. In terms of biological role, assembles around the rod to form the L-ring and probably protects the motor/basal body from shearing forces during rotation. This Legionella pneumophila (strain Corby) protein is Flagellar L-ring protein.